We begin with the raw amino-acid sequence, 148 residues long: Large ribosomal subunit protein bL9 (148 aa).

The protein belongs to the bacterial ribosomal protein bL9 family.

In terms of biological role, binds to the 23S rRNA. This is Large ribosomal subunit protein bL9 from Acetivibrio thermocellus (strain ATCC 27405 / DSM 1237 / JCM 9322 / NBRC 103400 / NCIMB 10682 / NRRL B-4536 / VPI 7372) (Clostridium thermocellum).